Here is a 354-residue protein sequence, read N- to C-terminus: Falstatin (354 aa).

The first 21 residues, 1 to 21 (MKSITFFVFNICSILALLSHC), serve as a signal peptide directing secretion. The BC loop; binds and inhibits the active site cavity of cysteine proteases signature appears at 226 to 236 (LEGNAGTGYLW). The interval 274 to 317 (KYKIDEHDSSKNVNREIESPEQKESDSKPKKPQMQLLGGPDRMR) is disordered. Positions 275-302 (YKIDEHDSSKNVNREIESPEQKESDSKP) are enriched in basic and acidic residues.

It belongs to the protease inhibitor I71 family. As to quaternary structure, oligomer; probably composed of 10 monomers. In terms of processing, during the liver stage, proteolytically cleaved.

The protein localises to the secreted. The protein resides in the cytoplasmic vesicle. It is found in the secretory vesicle. It localises to the microneme. Its subcellular location is the host cytoplasm. The protein localises to the parasitophorous vacuole lumen. Functionally, cysteine protease inhibitor. Required for the invasion of host erythrocytes by merozoites. In the mosquito vector, essential for the gliding motility of hemocoel sporozoites and, therefore, for salivary gland invasion and the subsequent transmission from the mosquito to the mammalian host. Required for the invasion of host hepatocytes. During the liver stage, may prevent host hepatocyte cell death likely by inhibiting host cysteine proteases. This chain is Falstatin, found in Plasmodium berghei (strain Anka).